We begin with the raw amino-acid sequence, 244 residues long: Protein pendolino (244 aa).

One can recognise a UBC core domain in the interval 20 to 176 (QQEYKILAEY…VQENIKESKE (157 aa)).

It belongs to the ubiquitin-conjugating enzyme family. FTS subfamily. Interacts (via N-terminus) with cav/HOAP (via N-terminus); the interaction is direct. Probably interacts (via N-terminus and UBC domain) with ver and moi.

The protein localises to the nucleus. It is found in the nucleolus. The protein resides in the chromosome. Required for efficient DNA replication, probably through involvement in telomere replication. May have a role in telomere capping of heterochromatic chromosome ends. This chain is Protein pendolino, found in Drosophila melanogaster (Fruit fly).